Here is a 416-residue protein sequence, read N- to C-terminus: MNMALISLAIDYKKSPIEVRSEFALSGLDVSMLYRSILAIDNVVHAVILSTCNRTEVYLEISDLRVVDDILVWWQGYVRNPNYKIKDYFKLRQGTEVIMHLMKLACGLESMVLGEPQILGQVKDSYTLSKKNHAIGKELDRVFQKVFATAKRVRSETRIGHCPVSVAFSAITLAKRQLDNISSKNVLIIGAGQTGELLFRHVTALAPKQIMLANRTIEKAQKITSAFRNASAHYLSELPQLIKKADIIIAAVNVLEYIVTCKYVGDKPRVFIDISIPQALDPKLGELEQNVYYCVDDINAVIEDNKDKRKYESSKAQKIIVKSLEEYLEKEKAIISNSAIKELFQKADGLVDLSLEKSLAKIRNGKDAEEIIKRFAYEIKKKVLHYPVVGMKEASKQGRSDCLVCMKRMFGLNVEK.

Substrate-binding positions include 51–54 (TCNR), Ser110, 115–117 (EPQ), and Gln121. The active-site Nucleophile is Cys52. 190 to 195 (GAGQTG) is a binding site for NADP(+).

This sequence belongs to the glutamyl-tRNA reductase family. As to quaternary structure, homodimer.

The enzyme catalyses (S)-4-amino-5-oxopentanoate + tRNA(Glu) + NADP(+) = L-glutamyl-tRNA(Glu) + NADPH + H(+). Its pathway is porphyrin-containing compound metabolism; protoporphyrin-IX biosynthesis; 5-aminolevulinate from L-glutamyl-tRNA(Glu): step 1/2. Its function is as follows. Catalyzes the NADPH-dependent reduction of glutamyl-tRNA(Glu) to glutamate 1-semialdehyde (GSA). This is Glutamyl-tRNA reductase from Francisella tularensis subsp. tularensis (strain FSC 198).